A 273-amino-acid chain; its full sequence is Large ribosomal subunit protein uL2cz/uL2cy (273 aa).

Disordered stretches follow at residues 1 to 23 and 223 to 273; these read MAIHLYKTSTPSTRNGAVDSQVK and NPVD…RRSK.

This sequence belongs to the universal ribosomal protein uL2 family. As to quaternary structure, part of the 50S ribosomal subunit.

Its subcellular location is the plastid. It is found in the chloroplast. The chain is Large ribosomal subunit protein uL2cz/uL2cy (rpl2-A) from Oenothera argillicola (Appalachian evening primrose).